The sequence spans 503 residues: Transcriptional regulator LovE (503 aa).

The segment at residues 35–67 is a DNA-binding region (zn(2)-C6 fungal-type); it reads CDRCHAQKIKCTGNKEVTGRAPCQRCQQAGLRC. Disordered regions lie at residues 89 to 124 and 331 to 358; these read ADPD…RQFL and SHMS…HSSV. Low complexity predominate over residues 339–357; it reads SRSQSPSRDDTSSSSGHSS.

The protein resides in the nucleus. Transcription factor that regulates the expression of the he gene cluster that mediates the biosynthesis of lovastatin (also known as mevinolin, mevacor or monacolin K), a hypolipidemic inhibitor of (3S)-hydroxymethylglutaryl-coenzyme A (HMG-CoA) reductase (HMGR). The polypeptide is Transcriptional regulator LovE (Aspergillus terreus).